The following is a 318-amino-acid chain: MQRANHSTVTQFILVGFSVFPHLQLMLFLLFLLMYLFTLLGNLLIMATVWSERSLHTPMYLFLCALSVSEILYTVAIIPRMLADLLSTQRSIAFLACASQMFFSFSFGFTHSFLLTVMGYDRYVAICHPLRYNVLMSPRGCACLVGCSWAGGLVMGMVVTSAIFHLAFCGHKEIHHFACHVPPLLKLACGDDVLVVAKGVGLVCITALLGCFLLILLSYAFIVAAILKIPSAEGRNKAFSTCASHLTVVVVHYGFASVIYLKPKSPQSLEGDTLMGITYTVLTPFLSPIIFSLRNKELKVAMKKTFFSKLYPEKNVMM.

Topologically, residues 1-25 are extracellular; it reads MQRANHSTVTQFILVGFSVFPHLQL. Asn-5 carries an N-linked (GlcNAc...) asparagine glycan. The helical transmembrane segment at 26–46 threads the bilayer; that stretch reads MLFLLFLLMYLFTLLGNLLIM. The Cytoplasmic portion of the chain corresponds to 47–54; that stretch reads ATVWSERS. Residues 55-75 form a helical membrane-spanning segment; it reads LHTPMYLFLCALSVSEILYTV. At 76–99 the chain is on the extracellular side; sequence AIIPRMLADLLSTQRSIAFLACAS. The cysteines at positions 97 and 189 are disulfide-linked. The chain crosses the membrane as a helical span at residues 100-120; sequence QMFFSFSFGFTHSFLLTVMGY. The Cytoplasmic portion of the chain corresponds to 121 to 139; that stretch reads DRYVAICHPLRYNVLMSPR. A helical transmembrane segment spans residues 140–160; the sequence is GCACLVGCSWAGGLVMGMVVT. Residues 161 to 197 are Extracellular-facing; the sequence is SAIFHLAFCGHKEIHHFACHVPPLLKLACGDDVLVVA. Residues 198-218 traverse the membrane as a helical segment; that stretch reads KGVGLVCITALLGCFLLILLS. Topologically, residues 219-238 are cytoplasmic; sequence YAFIVAAILKIPSAEGRNKA. A helical transmembrane segment spans residues 239–259; that stretch reads FSTCASHLTVVVVHYGFASVI. The Extracellular portion of the chain corresponds to 260-272; sequence YLKPKSPQSLEGD. Residues 273–293 form a helical membrane-spanning segment; the sequence is TLMGITYTVLTPFLSPIIFSL. Over 294–318 the chain is Cytoplasmic; that stretch reads RNKELKVAMKKTFFSKLYPEKNVMM.

It belongs to the G-protein coupled receptor 1 family.

The protein resides in the cell membrane. In terms of biological role, odorant receptor. The sequence is that of Olfactory receptor 10H1 (OR10H1) from Homo sapiens (Human).